A 633-amino-acid chain; its full sequence is Threonine--tRNA ligase (633 aa).

In terms of domain architecture, TGS spans 1-61; that stretch reads MPAIRLPDGS…DHDVDLAIVT (61 aa). Residues 242-533 are catalytic; that stretch reads DHRKLGRQLD…LIEHHAGAMP (292 aa). Residues Cys333, His384, and His510 each contribute to the Zn(2+) site.

Belongs to the class-II aminoacyl-tRNA synthetase family. As to quaternary structure, homodimer. Zn(2+) serves as cofactor.

The protein resides in the cytoplasm. The enzyme catalyses tRNA(Thr) + L-threonine + ATP = L-threonyl-tRNA(Thr) + AMP + diphosphate + H(+). In terms of biological role, catalyzes the attachment of threonine to tRNA(Thr) in a two-step reaction: L-threonine is first activated by ATP to form Thr-AMP and then transferred to the acceptor end of tRNA(Thr). Also edits incorrectly charged L-seryl-tRNA(Thr). This chain is Threonine--tRNA ligase, found in Laribacter hongkongensis (strain HLHK9).